Here is a 257-residue protein sequence, read N- to C-terminus: NAD-capped RNA hydrolase NudC (257 aa).

The substrate site is built by Lys-25 and Arg-69. Residues Cys-98 and Cys-101 each contribute to the Zn(2+) site. Glu-111 contributes to the substrate binding site. Zn(2+)-binding residues include Cys-116 and Cys-119. Residue Tyr-124 participates in substrate binding. In terms of domain architecture, Nudix hydrolase spans 125-248 (PQIAPCIIVA…TVARRLIEDT (124 aa)). A divalent metal cation contacts are provided by Ala-158, Glu-174, and Glu-178. The short motif at 159–180 (GFVEVGETLEQAVAREVMEESG) is the Nudix box element. A substrate-binding site is contributed by 192–199 (QPWPFPQS). Glu-219 serves as a coordination point for a divalent metal cation. Substrate is bound at residue Ala-241.

It belongs to the Nudix hydrolase family. NudC subfamily. As to quaternary structure, homodimer. It depends on Mg(2+) as a cofactor. Mn(2+) serves as cofactor. The cofactor is Zn(2+).

The catalysed reaction is a 5'-end NAD(+)-phospho-ribonucleoside in mRNA + H2O = a 5'-end phospho-adenosine-phospho-ribonucleoside in mRNA + beta-nicotinamide D-ribonucleotide + 2 H(+). The enzyme catalyses NAD(+) + H2O = beta-nicotinamide D-ribonucleotide + AMP + 2 H(+). It carries out the reaction NADH + H2O = reduced beta-nicotinamide D-ribonucleotide + AMP + 2 H(+). Its function is as follows. mRNA decapping enzyme that specifically removes the nicotinamide adenine dinucleotide (NAD) cap from a subset of mRNAs by hydrolyzing the diphosphate linkage to produce nicotinamide mononucleotide (NMN) and 5' monophosphate mRNA. The NAD-cap is present at the 5'-end of some mRNAs and stabilizes RNA against 5'-processing. Has preference for mRNAs with a 5'-end purine. Catalyzes the hydrolysis of a broad range of dinucleotide pyrophosphates. The polypeptide is NAD-capped RNA hydrolase NudC (Shigella flexneri serotype 5b (strain 8401)).